The primary structure comprises 313 residues: Ribosomal RNA small subunit methyltransferase H (313 aa).

S-adenosyl-L-methionine is bound by residues Gly-35 to His-37, Asp-55, Phe-81, Asp-103, and Gln-110.

Belongs to the methyltransferase superfamily. RsmH family.

Its subcellular location is the cytoplasm. The catalysed reaction is cytidine(1402) in 16S rRNA + S-adenosyl-L-methionine = N(4)-methylcytidine(1402) in 16S rRNA + S-adenosyl-L-homocysteine + H(+). Functionally, specifically methylates the N4 position of cytidine in position 1402 (C1402) of 16S rRNA. This Pseudomonas aeruginosa (strain ATCC 15692 / DSM 22644 / CIP 104116 / JCM 14847 / LMG 12228 / 1C / PRS 101 / PAO1) protein is Ribosomal RNA small subunit methyltransferase H.